A 35-amino-acid polypeptide reads, in one-letter code: Peptide Hact-3 (35 aa).

Expressed in tentacles.

The protein resides in the nematocyst. It is found in the secreted. Peptide with unknown function. Does not exhibit antimicrobial activity against Escherichia coli and Staphylococcus aureus. In Heliofungia actiniformis (Mushroom coral), this protein is Peptide Hact-3.